Here is a 304-residue protein sequence, read N- to C-terminus: Ribonuclease Z (304 aa).

Residues His63, His65, Asp67, His68, His143, Asp213, and His271 each coordinate Zn(2+). Asp67 acts as the Proton acceptor in catalysis.

The protein belongs to the RNase Z family. Homodimer. Zn(2+) is required as a cofactor.

It catalyses the reaction Endonucleolytic cleavage of RNA, removing extra 3' nucleotides from tRNA precursor, generating 3' termini of tRNAs. A 3'-hydroxy group is left at the tRNA terminus and a 5'-phosphoryl group is left at the trailer molecule.. Its function is as follows. Zinc phosphodiesterase, which displays some tRNA 3'-processing endonuclease activity. Probably involved in tRNA maturation, by removing a 3'-trailer from precursor tRNA. In Parabacteroides distasonis (strain ATCC 8503 / DSM 20701 / CIP 104284 / JCM 5825 / NCTC 11152), this protein is Ribonuclease Z.